A 566-amino-acid polypeptide reads, in one-letter code: OTU domain-containing protein 5 (566 aa).

2 disordered regions span residues 1 to 117 (MTIL…GDAL) and 145 to 175 (GPGH…GAGY). Over residues 11–30 (PPDADPANEPPPPGPLPPAP) the composition is skewed to pro residues. Residues 34 to 47 (AGVGVGGGGTGVGG) are compositionally biased toward gly residues. Over residues 63 to 75 (ASPPPQGPLPGPP) the composition is skewed to pro residues. A Phosphoserine modification is found at Ser-64. Positions 84-97 (AVPPGAVAGPRPQQ) are enriched in low complexity. Residues 105-115 (GPGGPGGGPGD) show a composition bias toward gly residues. Phosphoserine is present on Ser-165. A Phosphotyrosine modification is found at Tyr-175. Ser-177 bears the Phosphoserine mark. A Phosphothreonine modification is found at Thr-195. Positions 213–336 (FIIKQMKEDG…NIHYNSVVNP (124 aa)) constitute an OTU domain. The cys-loop stretch occupies residues 218–224 (MKEDGAC). Asp-221 is a catalytic residue. Cys-224 functions as the Nucleophile in the catalytic mechanism. Residues 273-283 (KRKNNCHGNHI) are variable-loop. Ser-323 carries the post-translational modification Phosphoserine. The segment at 324–329 (YHRNIH) is his-loop. The active site involves His-329. Phosphoserine is present on residues Ser-332 and Ser-370. The interval 413–499 (ARQVRGPSQP…TSSQFSAGGD (87 aa)) is disordered. 2 stretches are compositionally biased toward low complexity: residues 425 to 438 (ASAT…AASS) and 445 to 457 (SRSP…ASSP). A Phosphoserine modification is found at Ser-447. Phosphothreonine is present on Thr-502. Ser-503 is subject to Phosphoserine.

The protein belongs to the peptidase C85 family. As to quaternary structure, interacts with TRAF3. In terms of processing, phosphorylation at Ser-177 is required for deubiquitinating activity. Phosphorylation at Ser-323, Ser-332 and Ser-503 by MTOR promotes its activity.

Its subcellular location is the nucleus. The enzyme catalyses Thiol-dependent hydrolysis of ester, thioester, amide, peptide and isopeptide bonds formed by the C-terminal Gly of ubiquitin (a 76-residue protein attached to proteins as an intracellular targeting signal).. Inhibited by N-ethyl-maleimide (NEM). In terms of biological role, deubiquitinating enzyme that functions as a negative regulator of the innate immune system. Has peptidase activity towards 'Lys-48'- and 'Lys-63'-linked polyubiquitin chains. Can also cleave 'Lys-11'-linked ubiquitin chains (in vitro). Acts via TRAF3 deubiquitination and subsequent suppression of type I interferon (IFN) production. Controls neuroectodermal differentiation through cleaving 'Lys-48'-linked ubiquitin chains to counteract degradation of select chromatin regulators such as ARID1A, HDAC2 and HCF1. Acts as a positive regulator of mTORC1 and mTORC2 signaling following phosphorylation by MTOR: acts by mediating deubiquitination of BTRC, leading to its stability. In Mus musculus (Mouse), this protein is OTU domain-containing protein 5.